The sequence spans 130 residues: Phosphoribosyl-AMP cyclohydrolase (130 aa).

Residue Asp-80 coordinates Mg(2+). Cys-81 lines the Zn(2+) pocket. Residues Asp-82 and Asp-84 each contribute to the Mg(2+) site. Positions 98 and 105 each coordinate Zn(2+).

Belongs to the PRA-CH family. As to quaternary structure, homodimer. It depends on Mg(2+) as a cofactor. Zn(2+) is required as a cofactor.

The protein resides in the cytoplasm. It catalyses the reaction 1-(5-phospho-beta-D-ribosyl)-5'-AMP + H2O = 1-(5-phospho-beta-D-ribosyl)-5-[(5-phospho-beta-D-ribosylamino)methylideneamino]imidazole-4-carboxamide. Its pathway is amino-acid biosynthesis; L-histidine biosynthesis; L-histidine from 5-phospho-alpha-D-ribose 1-diphosphate: step 3/9. Functionally, catalyzes the hydrolysis of the adenine ring of phosphoribosyl-AMP. In Oleidesulfovibrio alaskensis (strain ATCC BAA-1058 / DSM 17464 / G20) (Desulfovibrio alaskensis), this protein is Phosphoribosyl-AMP cyclohydrolase.